A 404-amino-acid polypeptide reads, in one-letter code: Pleckstrin homology domain-containing family A member 1 (404 aa).

2 PH domains span residues 7–112 (QNRI…KAIK) and 191–289 (AVIK…GAIV). 2 disordered regions span residues 291 to 332 (QRGP…RSNS) and 355 to 404 (NFKV…VSDV). Low complexity predominate over residues 316–332 (TNAATATSHSTASRSNS). Ser-332 and Ser-362 each carry phosphoserine.

Interacts with MPDZ and PTPN13. Highly expressed in skeletal muscle, thymus, pancreas, placenta and lung. Detected at low levels in brain, heart, peripheral blood leukocytes, testis, ovary, spinal cord, thyroid, kidney, liver, small intestine and colon.

It is found in the cytoplasm. Its subcellular location is the cell membrane. It localises to the nucleus. Its function is as follows. Binds specifically to phosphatidylinositol 3,4-diphosphate (PtdIns3,4P2), but not to other phosphoinositides. May recruit other proteins to the plasma membrane. In Homo sapiens (Human), this protein is Pleckstrin homology domain-containing family A member 1 (PLEKHA1).